Reading from the N-terminus, the 305-residue chain is Acetyl-coenzyme A carboxylase carboxyl transferase subunit beta (305 aa).

The region spanning 27–296 (LWVKCSACRE…PAAKADLAAR (270 aa)) is the CoA carboxyltransferase N-terminal domain. Zn(2+)-binding residues include Cys31, Cys34, Cys50, and Cys53. Residues 31 to 53 (CSACRELIYKKQLNDNLKVCPKC) form a C4-type zinc finger.

It belongs to the AccD/PCCB family. As to quaternary structure, acetyl-CoA carboxylase is a heterohexamer composed of biotin carboxyl carrier protein (AccB), biotin carboxylase (AccC) and two subunits each of ACCase subunit alpha (AccA) and ACCase subunit beta (AccD). Requires Zn(2+) as cofactor.

The protein resides in the cytoplasm. The catalysed reaction is N(6)-carboxybiotinyl-L-lysyl-[protein] + acetyl-CoA = N(6)-biotinyl-L-lysyl-[protein] + malonyl-CoA. Its pathway is lipid metabolism; malonyl-CoA biosynthesis; malonyl-CoA from acetyl-CoA: step 1/1. Functionally, component of the acetyl coenzyme A carboxylase (ACC) complex. Biotin carboxylase (BC) catalyzes the carboxylation of biotin on its carrier protein (BCCP) and then the CO(2) group is transferred by the transcarboxylase to acetyl-CoA to form malonyl-CoA. The chain is Acetyl-coenzyme A carboxylase carboxyl transferase subunit beta from Chloroflexus aggregans (strain MD-66 / DSM 9485).